The primary structure comprises 313 residues: Cytosolic Fe-S cluster assembly factor NUBP1 homolog (313 aa).

The tract at residues 1 to 25 (MSDVPDDANAGCPGTGSAGAGKASG) is disordered. [4Fe-4S] cluster is bound by residues cysteine 12, cysteine 26, cysteine 29, and cysteine 35. 66-73 (GKGGVGKS) lines the ATP pocket. The [4Fe-4S] cluster site is built by cysteine 240 and cysteine 243.

The protein belongs to the Mrp/NBP35 ATP-binding proteins family. NUBP1/NBP35 subfamily. Heterotetramer of 2 NUBP1 and 2 NUBP2 chains. Requires [4Fe-4S] cluster as cofactor. As to expression, expressed in head amphid and labial ciliated sensory neurons and tail phasmid ciliated chemosensory neurons.

The protein resides in the cytoplasm. It localises to the cell projection. Functionally, component of the cytosolic iron-sulfur (Fe/S) protein assembly (CIA) machinery. Required for maturation of extramitochondrial Fe-S proteins. The NUBP1-NUBP2 heterotetramer forms a Fe-S scaffold complex, mediating the de novo assembly of an Fe-S cluster and its transfer to target apoproteins. Regulates cilium formation and structure. This is Cytosolic Fe-S cluster assembly factor NUBP1 homolog from Caenorhabditis elegans.